A 127-amino-acid polypeptide reads, in one-letter code: Large ribosomal subunit protein bL12 (127 aa).

This sequence belongs to the bacterial ribosomal protein bL12 family. As to quaternary structure, homodimer. Part of the ribosomal stalk of the 50S ribosomal subunit. Forms a multimeric L10(L12)X complex, where L10 forms an elongated spine to which 2 to 4 L12 dimers bind in a sequential fashion. Binds GTP-bound translation factors.

In terms of biological role, forms part of the ribosomal stalk which helps the ribosome interact with GTP-bound translation factors. Is thus essential for accurate translation. In Leptospira interrogans serogroup Icterohaemorrhagiae serovar copenhageni (strain Fiocruz L1-130), this protein is Large ribosomal subunit protein bL12.